Reading from the N-terminus, the 111-residue chain is Phosphoribosyl-ATP pyrophosphatase (111 aa).

It belongs to the PRA-PH family.

It localises to the cytoplasm. It catalyses the reaction 1-(5-phospho-beta-D-ribosyl)-ATP + H2O = 1-(5-phospho-beta-D-ribosyl)-5'-AMP + diphosphate + H(+). It functions in the pathway amino-acid biosynthesis; L-histidine biosynthesis; L-histidine from 5-phospho-alpha-D-ribose 1-diphosphate: step 2/9. This is Phosphoribosyl-ATP pyrophosphatase from Pseudomonas paraeruginosa (strain DSM 24068 / PA7) (Pseudomonas aeruginosa (strain PA7)).